The following is a 103-amino-acid chain: Large ribosomal subunit protein bL21 (103 aa).

This sequence belongs to the bacterial ribosomal protein bL21 family. In terms of assembly, part of the 50S ribosomal subunit. Contacts protein L20.

Its function is as follows. This protein binds to 23S rRNA in the presence of protein L20. The polypeptide is Large ribosomal subunit protein bL21 (Histophilus somni (strain 129Pt) (Haemophilus somnus)).